A 70-amino-acid chain; its full sequence is Protein SlyX homolog (70 aa).

This sequence belongs to the SlyX family.

This chain is Protein SlyX homolog, found in Shewanella loihica (strain ATCC BAA-1088 / PV-4).